We begin with the raw amino-acid sequence, 88 residues long: MPRPGGSYSTSDLSRKSGDIIAEALRHPVTITQRNKPRLVLLNIDDYERLMRQYDARSVGTLETLPGELLNEFEAAVDAYGETDETNR.

Belongs to the phD/YefM antitoxin family.

This is an uncharacterized protein from Sinorhizobium fredii (strain NBRC 101917 / NGR234).